A 203-amino-acid polypeptide reads, in one-letter code: Putative GPI-anchored protein YHR214W (203 aa).

Residues 1–23 (MFNRFNKFQAAVALALLSRGALG) form the signal peptide. Residues Asn28 and Asn138 are each glycosylated (N-linked (GlcNAc...) asparagine). The GPI-anchor amidated asparagine moiety is linked to residue Asn184. Residues 185 to 203 (AGTFSLSNAILNGGSVSGL) constitute a propeptide, removed in mature form.

The protein localises to the cell membrane. This is Putative GPI-anchored protein YHR214W from Saccharomyces cerevisiae (strain ATCC 204508 / S288c) (Baker's yeast).